A 390-amino-acid chain; its full sequence is Succinyl-diaminopimelate desuccinylase (390 aa).

His74 lines the Zn(2+) pocket. Residue Asp76 is part of the active site. A Zn(2+)-binding site is contributed by Asp107. The Proton acceptor role is filled by Glu140. Zn(2+)-binding residues include Glu141, Glu169, and His363.

This sequence belongs to the peptidase M20A family. DapE subfamily. Homodimer. It depends on Zn(2+) as a cofactor. Requires Co(2+) as cofactor.

The enzyme catalyses N-succinyl-(2S,6S)-2,6-diaminopimelate + H2O = (2S,6S)-2,6-diaminopimelate + succinate. The protein operates within amino-acid biosynthesis; L-lysine biosynthesis via DAP pathway; LL-2,6-diaminopimelate from (S)-tetrahydrodipicolinate (succinylase route): step 3/3. Catalyzes the hydrolysis of N-succinyl-L,L-diaminopimelic acid (SDAP), forming succinate and LL-2,6-diaminopimelate (DAP), an intermediate involved in the bacterial biosynthesis of lysine and meso-diaminopimelic acid, an essential component of bacterial cell walls. The chain is Succinyl-diaminopimelate desuccinylase from Bartonella quintana (strain Toulouse) (Rochalimaea quintana).